Reading from the N-terminus, the 141-residue chain is Ubiquitin-like protein ATG12 (141 aa).

The segment at 1–53 (MSEDSEVVLQLPSAPVGAGGESLPELSPETATPEPPSSAAVSPGTEEPPGDTK) is disordered. Positions 23 to 40 (LPELSPETATPEPPSSAA) are enriched in low complexity. G141 participates in a covalent cross-link: Glycyl lysine isopeptide (Gly-Lys) (interchain with K-? in acceptor protein).

This sequence belongs to the ATG12 family. As to quaternary structure, forms a conjugate with ATG5. Part of the minor complex composed of 4 sets of ATG12-ATG5 and ATG16L1 (400 kDa); this complex interacts with ATG3 leading to disruption of ATG7 interaction and promotion of ATG8-like proteins lipidation. Forms an 800-kDa complex composed of ATG12-ATG5 and ATG16L2. Interacts with DHX58/RIG-1, IFIH1/MDA5 and MAVS/IPS-1 in monomeric form as well as in ATG12-ATG5 conjugate. The interaction with MAVS is further enhanced upon vesicular stomatitis virus (VSV) infection. Interacts with ATG3; this interaction is essential for phosphatidylethanolamine (PE)-conjugated ATG8-like proteins formation. Interacts with ATG7. Interacts with ATG10. The ATG12-ATG5 conjugate interacts with RAB33A; this interaction is bridged by ATG16L1 and promotes ATG12-ATG5-ATG16L1 complex recruitment to phagophores. Interacts with TECPR1. Interacts with SH3BGRL. The ATG12-ATG5 conjugate interacts with PDCD6IP (via the BRO1 domain); this interaction is bridged by ATG12 and promotes multiple PDCD6IP-mediated functions such as endolysosomal trafficking, macroautophagy and exosome biogenesis. Post-translationally, acetylated by EP300. As to expression, ubiquitous.

The protein resides in the cytoplasm. It is found in the preautophagosomal structure membrane. Its function is as follows. Ubiquitin-like protein involved in autophagy vesicles formation. Conjugation with ATG5 through a ubiquitin-like conjugating system involving also ATG7 as an E1-like activating enzyme and ATG10 as an E2-like conjugating enzyme, is essential for its function. The ATG12-ATG5 conjugate acts as an E3-like enzyme which is required for lipidation of ATG8 family proteins and their association to the vesicle membranes. As part of the ATG8 conjugation system with ATG5 and ATG16L1, required for recruitment of LRRK2 to stressed lysosomes and induction of LRRK2 kinase activity in response to lysosomal stress. Functionally, (Microbial infection) May act as a proviral factor. In association with ATG5, negatively regulates the innate antiviral immune response by impairing the type I IFN production pathway upon vesicular stomatitis virus (VSV) infection. This chain is Ubiquitin-like protein ATG12, found in Mus musculus (Mouse).